Reading from the N-terminus, the 248-residue chain is N-acylneuraminate-9-phosphatase (248 aa).

Asp12 contributes to the Mg(2+) binding site. 5 residues coordinate phosphate: Leu13, Asp14, Thr131, Asn132, and Lys164. Mg(2+) is bound at residue Asp14. Asp189 contacts Mg(2+).

The protein belongs to the HAD-like hydrolase superfamily. NANP family. Mg(2+) is required as a cofactor.

The catalysed reaction is N-acetylneuraminate 9-phosphate + H2O = N-acetylneuraminate + phosphate. The enzyme catalyses N-glycoloylneuraminate 9-phosphate + H2O = N-glycoloylneuraminate + phosphate. It functions in the pathway amino-sugar metabolism; N-acetylneuraminate biosynthesis. With respect to regulation, inhibited by calcium. Inhibited by vanadate, sodium orthovanate and phosphonate. Catalyzes the dephosphorylation of N-acylneuraminate 9-phosphate (Neu5Ac-9-P) to sialic acid N-acetylneuraminic acid (Neu5Ac). May also use N-glycoloylneuraminate 9-phosphate as substrate. The chain is N-acylneuraminate-9-phosphatase from Mus musculus (Mouse).